The sequence spans 94 residues: Small ribosomal subunit protein uS19 (94 aa).

Belongs to the universal ribosomal protein uS19 family.

In terms of biological role, protein S19 forms a complex with S13 that binds strongly to the 16S ribosomal RNA. The polypeptide is Small ribosomal subunit protein uS19 (Hamiltonella defensa subsp. Acyrthosiphon pisum (strain 5AT)).